Consider the following 72-residue polypeptide: Mitotic-spindle organizing protein 1 (72 aa).

The protein belongs to the MOZART1 family. As to quaternary structure, part of the gamma-tubulin complex.

The protein localises to the cytoplasm. It localises to the cytoskeleton. Its subcellular location is the microtubule organizing center. It is found in the spindle pole body. Its function is as follows. Required for gamma-tubulin complex recruitment to the microtubule organizing center (MTOC). This Cryptococcus neoformans var. neoformans serotype D (strain B-3501A) (Filobasidiella neoformans) protein is Mitotic-spindle organizing protein 1.